The chain runs to 396 residues: L-lactate dehydrogenase (396 aa).

The 380-residue stretch at 1–380 (MIISAASDYR…TQDSLVQGLG (380 aa)) folds into the FMN hydroxy acid dehydrogenase domain. A substrate-binding site is contributed by Tyr24. Residues Ser106 and Gln127 each contribute to the FMN site. Tyr129 serves as a coordination point for substrate. Thr155 is a binding site for FMN. Position 164 (Arg164) interacts with substrate. Lys251 is a binding site for FMN. The Proton acceptor role is filled by His275. Arg278 is a binding site for substrate. 306 to 330 (DSGIRNGLDVVRMIALGADTVLLGR) is an FMN binding site.

The protein belongs to the FMN-dependent alpha-hydroxy acid dehydrogenase family. Requires FMN as cofactor.

It is found in the cell inner membrane. The enzyme catalyses (S)-lactate + A = pyruvate + AH2. Its function is as follows. Catalyzes the conversion of L-lactate to pyruvate. Is coupled to the respiratory chain. This is L-lactate dehydrogenase from Shigella boydii serotype 4 (strain Sb227).